Consider the following 344-residue polypeptide: Outer membrane protein B (344 aa).

The signal sequence occupies residues M1–A30.

Belongs to the chlamydial OMP family.

The protein localises to the cell outer membrane. This Chlamydia pneumoniae (Chlamydophila pneumoniae) protein is Outer membrane protein B (ompB).